A 164-amino-acid polypeptide reads, in one-letter code: MEGSSIDVTFTAQLETGETLVSINITSYEETPGVLVEENRLYGTYESVFGFGNDALKYRLGDEFKTAASWEELPTDSDTQLYLWKAPQNLQKTFTYEVTLIYDYQEQSESGGSGSNSRSSSDTTEPTDPPAPVRKTLVKNYTKTIVGNWSRWANKLRKYAYARP.

The segment at 107–136 (QSESGGSGSNSRSSSDTTEPTDPPAPVRKT) is disordered.

This is an uncharacterized protein from Escherichia coli (Bacteriophage T4).